A 501-amino-acid chain; its full sequence is Dynein regulatory complex subunit 5 (501 aa).

Residues 1 to 23 (MQETVTTSALLDPSHSSVSTQDK) show a composition bias toward polar residues. Disordered regions lie at residues 1–56 (MQET…HPGA) and 203–222 (PAQL…EMEE). Residues 24 to 34 (SSTGGHTSSTG) show a composition bias toward low complexity. Over residues 35–49 (PQPSKPSITPVSAKS) the composition is skewed to polar residues. 5 LRR repeats span residues 308 to 321 (VLEE…LIGD), 335 to 355 (RLRV…QSLA), 363 to 383 (NLIS…QALA), 391 to 411 (CLTT…TLLS), and 419 to 439 (TLTS…KQLL).

Belongs to the DRC5 family. In terms of assembly, component of the nexin-dynein regulatory complex (N-DRC). Interacts with DRC1. Interacts with FBXL13/DRC6, DRC3 and DRC7.

It localises to the cell projection. Its subcellular location is the cilium. The protein localises to the flagellum. The protein resides in the cytoplasm. It is found in the cytoskeleton. It localises to the flagellum axoneme. Functionally, component of the nexin-dynein regulatory complex (N-DRC) a key regulator of ciliary/flagellar motility which maintains the alignment and integrity of the distal axoneme and regulates microtubule sliding in motile axonemes. May play a role in the assembly of N-DRC. May be required for sperm motility. The polypeptide is Dynein regulatory complex subunit 5 (TCTE1) (Macaca fascicularis (Crab-eating macaque)).